Here is a 425-residue protein sequence, read N- to C-terminus: Dihydroorotase (425 aa).

Zn(2+) is bound by residues His-56 and His-58. Substrate contacts are provided by residues 58-60 (HYR) and Asn-90. Asp-148, His-175, and His-228 together coordinate Zn(2+). Residue Asn-274 coordinates substrate. Asp-301 contacts Zn(2+). Residue Asp-301 is part of the active site. Substrate is bound by residues His-305 and 319 to 320 (FG).

This sequence belongs to the metallo-dependent hydrolases superfamily. DHOase family. Class I DHOase subfamily. Zn(2+) is required as a cofactor.

The catalysed reaction is (S)-dihydroorotate + H2O = N-carbamoyl-L-aspartate + H(+). It participates in pyrimidine metabolism; UMP biosynthesis via de novo pathway; (S)-dihydroorotate from bicarbonate: step 3/3. Its function is as follows. Catalyzes the reversible cyclization of carbamoyl aspartate to dihydroorotate. The polypeptide is Dihydroorotase (Lactobacillus acidophilus (strain ATCC 700396 / NCK56 / N2 / NCFM)).